The following is a 361-amino-acid chain: 3-dehydroquinate synthase (361 aa).

Belongs to the archaeal-type DHQ synthase family.

It carries out the reaction 2-amino-2,3,7-trideoxy-D-lyxo-hept-6-ulosonate + NAD(+) + H2O = 3-dehydroquinate + NH4(+) + NADH + H(+). Functionally, catalyzes the oxidative deamination and cyclization of 2-amino-3,7-dideoxy-D-threo-hept-6-ulosonic acid (ADH) to yield 3-dehydroquinate (DHQ), which is fed into the canonical shikimic pathway of aromatic amino acid biosynthesis. The chain is 3-dehydroquinate synthase (aroB') from Methanocaldococcus jannaschii (strain ATCC 43067 / DSM 2661 / JAL-1 / JCM 10045 / NBRC 100440) (Methanococcus jannaschii).